We begin with the raw amino-acid sequence, 390 residues long: MDERAVLEELKKYRKMDLKYEDGAILGSMCTKPHPITKKISDMFFETNLGDPGLFRGTKKLEDEVINNIGKFLNNPNPFGYIISGGTEANITAMRAINNIAKAKRKNHKTTVIMPETAHFSFEKAREMMDLNLITPPLTKYYTMDLKYINDFIEDRNNKNDISVDGIVGIAGCTELGAIDNIKELSKIAEQNNIFLHVDAAFGGFVIPFLDDKYKLDNYCYEFDFSLNGVKSMTVDPHKMGLAPIPAGGILFRDKSFKKYLDVEAPYLTDIHQATIIGTRSGVGVASTWGVMKLFGEEGYKNLASECMDKTHYLVKEAKKLGFKPVIDPVLNIVALEDDNPEETSLKLRKMGWFISICKCVKALRIIVMPHVEKEHIDKFLGALTEVKKN.

Residue lysine 239 is modified to N6-(pyridoxal phosphate)lysine.

It belongs to the group II decarboxylase family. MfnA subfamily. Pyridoxal 5'-phosphate serves as cofactor.

The enzyme catalyses L-tyrosine + H(+) = tyramine + CO2. It catalyses the reaction L-aspartate + H(+) = beta-alanine + CO2. It functions in the pathway cofactor biosynthesis; methanofuran biosynthesis. The protein operates within cofactor biosynthesis; coenzyme A biosynthesis. Functionally, catalyzes the decarboxylation of L-tyrosine to produce tyramine for methanofuran biosynthesis. Can also catalyze the decarboxylation of L-aspartate to produce beta-alanine for coenzyme A (CoA) biosynthesis. The chain is Probable L-tyrosine/L-aspartate decarboxylase from Methanococcus aeolicus (strain ATCC BAA-1280 / DSM 17508 / OCM 812 / Nankai-3).